A 551-amino-acid chain; its full sequence is Xylulose kinase (551 aa).

4 residues coordinate substrate: His114, Arg185, Asp295, and Asn296. ATP contacts are provided by residues Trp370, 456–457, and Asn460; that span reads GA.

This sequence belongs to the FGGY kinase family. Monomer.

It carries out the reaction D-xylulose + ATP = D-xylulose 5-phosphate + ADP + H(+). Phosphorylates D-xylulose to produce D-xylulose 5-phosphate, a molecule that may play an important role in the regulation of glucose metabolism and lipogenesis. The protein is Xylulose kinase (Xylb) of Mus musculus (Mouse).